We begin with the raw amino-acid sequence, 330 residues long: uncharacterized protein (330 aa).

The next 10 membrane-spanning stretches (helical) occupy residues 27 to 47, 56 to 76, 90 to 110, 119 to 139, 147 to 167, 176 to 196, 206 to 226, 243 to 263, 270 to 290, and 294 to 314; these read MGAYVSLAAAMAIVGSSVVVG, VFLSSGLRFLIASVVLLMLLF, VFVLLVQSFTGVFLFSICLLY, ESGILTSTTPMLIGILSFFLL, TLIGILLAVCGVMAINLFGAG, LFGNMLIIAAVIGEALFTLMA, LAISTFVSLFGFLFFLPFALF, YVLYYALFVTVLAFYLWYSGV, VSGIFTSVLPVSAVILSGVIL, and FEFVHFIGIACVIGGIFVTVI. EamA domains follow at residues 38–163 and 187–314; these read AIVG…AINL and IGEA…VTVI.

The protein belongs to the EamA transporter family.

The protein localises to the cell membrane. This is an uncharacterized protein from Bacillus subtilis (strain 168).